Consider the following 402-residue polypeptide: Protein PMR5 (402 aa).

A helical; Signal-anchor for type II membrane protein membrane pass occupies residues 7–23 (LLGISVVSAIFFLVLQQ). The interval 40-60 (GSSSGSSGNQYSSSRPSAGFQ) is disordered. The span at 41 to 56 (SSSGSSGNQYSSSRPS) shows a compositional bias: low complexity. Positions 140–142 (GDS) match the GDS motif motif. Positions 379 to 393 (DCSHWCLPGLPDTWN) match the DCXHWCLPGXXDXWN motif motif.

Belongs to the PC-esterase family. TBL subfamily. In terms of tissue distribution, expressed in flowers, siliques, stems and leaves.

It is found in the membrane. Functionally, required for nonhost resistance (NHR) during plant-microbe interactions. Plants mutated in PMR5 are resistant to powdery mildew species. May act as a bridging protein that binds pectin and other cell wall polysaccharides. Probably involved in maintaining esterification of pectins. May be involved in the specific O-acetylation of cell wall polymers. The polypeptide is Protein PMR5 (PMR5) (Arabidopsis thaliana (Mouse-ear cress)).